The chain runs to 126 residues: Putative gene 48 protein (126 aa).

In Bacillus phage SP01 (Bacteriophage SP01), this protein is Putative gene 48 protein (48).